Reading from the N-terminus, the 458-residue chain is ATP synthase subunit beta (458 aa).

148 to 155 (GGAGVGKT) is an ATP binding site.

It belongs to the ATPase alpha/beta chains family. As to quaternary structure, F-type ATPases have 2 components, CF(1) - the catalytic core - and CF(0) - the membrane proton channel. CF(1) has five subunits: alpha(3), beta(3), gamma(1), delta(1), epsilon(1). CF(0) has three main subunits: a(1), b(2) and c(9-12). The alpha and beta chains form an alternating ring which encloses part of the gamma chain. CF(1) is attached to CF(0) by a central stalk formed by the gamma and epsilon chains, while a peripheral stalk is formed by the delta and b chains.

It localises to the cell inner membrane. The enzyme catalyses ATP + H2O + 4 H(+)(in) = ADP + phosphate + 5 H(+)(out). In terms of biological role, produces ATP from ADP in the presence of a proton gradient across the membrane. The catalytic sites are hosted primarily by the beta subunits. The polypeptide is ATP synthase subunit beta (Pseudomonas fluorescens (strain Pf0-1)).